Consider the following 149-residue polypeptide: Large ribosomal subunit protein uL11 (149 aa).

It belongs to the universal ribosomal protein uL11 family. As to quaternary structure, part of the ribosomal stalk of the 50S ribosomal subunit. Interacts with L10 and the large rRNA to form the base of the stalk. L10 forms an elongated spine to which L12 dimers bind in a sequential fashion forming a multimeric L10(L12)X complex. One or more lysine residues are methylated.

In terms of biological role, forms part of the ribosomal stalk which helps the ribosome interact with GTP-bound translation factors. The protein is Large ribosomal subunit protein uL11 of Methylobacterium radiotolerans (strain ATCC 27329 / DSM 1819 / JCM 2831 / NBRC 15690 / NCIMB 10815 / 0-1).